A 360-amino-acid polypeptide reads, in one-letter code: Peptide chain release factor 1 (360 aa).

Position 235 is an N5-methylglutamine (Gln-235).

It belongs to the prokaryotic/mitochondrial release factor family. In terms of processing, methylated by PrmC. Methylation increases the termination efficiency of RF1.

The protein localises to the cytoplasm. Functionally, peptide chain release factor 1 directs the termination of translation in response to the peptide chain termination codons UAG and UAA. The sequence is that of Peptide chain release factor 1 from Bordetella pertussis (strain Tohama I / ATCC BAA-589 / NCTC 13251).